A 512-amino-acid chain; its full sequence is Sucrose transport protein SUC5 (512 aa).

The interval Met-1 to Gln-27 is disordered. Residues Met-1–Lys-33 are Cytoplasmic-facing. Polar residues predominate over residues Asn-11–Pro-22. Ser-20 carries the post-translational modification Phosphoserine. Residues Ile-34–Leu-54 form a helical membrane-spanning segment. At Leu-55–Lys-67 the chain is on the extracellular side. The chain crosses the membrane as a helical span at residues Trp-68–Gly-88. Residues Tyr-89–Arg-102 are Cytoplasmic-facing. A helical membrane pass occupies residues Pro-103–Ala-123. At Asp-124 to Arg-140 the chain is on the extracellular side. A helical membrane pass occupies residues Ala-141–Gly-161. The Cytoplasmic segment spans residues Pro-162–Arg-179. A helical transmembrane segment spans residues Val-180 to Gly-200. At Ser-201–Lys-225 the chain is on the extracellular side. Residues Thr-226–Val-246 form a helical membrane-spanning segment. Residues Lys-247–Pro-281 are Cytoplasmic-facing. The chain crosses the membrane as a helical span at residues Met-282–Tyr-302. Over Asp-303 to Gly-333 the chain is Extracellular. Residues Ala-334–Ile-354 traverse the membrane as a helical segment. At Gly-355–Arg-363 the chain is on the cytoplasmic side. The chain crosses the membrane as a helical span at residues Leu-364–Lys-384. Residues Ser-385 to Gly-406 lie on the Extracellular side of the membrane. A helical membrane pass occupies residues Val-407–Ala-427. Over Leu-428–Gln-440 the chain is Cytoplasmic. The chain crosses the membrane as a helical span at residues Gly-441–Ser-461. The Extracellular segment spans residues Ser-462 to Asn-473. Residues Leu-474–Val-494 form a helical membrane-spanning segment. At Leu-495–His-512 the chain is on the cytoplasmic side.

Belongs to the glycoside-pentoside-hexuronide (GPH) cation symporter transporter (TC 2.A.2.4) family. Widely expressed. Expressed in the endosperm and on the epidermis of the outer surface of the cotyledons of torpedo-stage or older embryos.

It localises to the cell membrane. It catalyses the reaction sucrose(out) + H(+)(out) = sucrose(in) + H(+)(in). It participates in glycan biosynthesis; sucrose metabolism. Inhibited by protonophores (e.g. carbonyl cyanide m-chlorophenyl-hydrazone (CCCP)) and SH group inhibitors (e.g. p-chloromercuribenzene sulphonic acid (PCMBS)). Functionally, responsible in a heterologous system for the transport of sucrose into the cell, with the concomitant uptake of protons (symport system). Can also transport biotin, and probably maltose at a lesser rate. In planta, the role of SUC5 for the transport of sucrose seems to be negligible. Plays a role in the nutrition of the filial tissues during early seed development and is probably involved in the import of biotin into the endosperm and the embryo epidermis. This chain is Sucrose transport protein SUC5, found in Arabidopsis thaliana (Mouse-ear cress).